Here is a 381-residue protein sequence, read N- to C-terminus: Tryptophan--tRNA ligase (381 aa).

Residues 82–90 (PSLGMHIGH) carry the 'HIGH' region motif. Positions 254-258 (KMSSS) match the 'KMSKS' region motif.

It belongs to the class-I aminoacyl-tRNA synthetase family.

Its subcellular location is the cytoplasm. The enzyme catalyses tRNA(Trp) + L-tryptophan + ATP = L-tryptophyl-tRNA(Trp) + AMP + diphosphate + H(+). The polypeptide is Tryptophan--tRNA ligase (Sulfurisphaera tokodaii (strain DSM 16993 / JCM 10545 / NBRC 100140 / 7) (Sulfolobus tokodaii)).